Reading from the N-terminus, the 494-residue chain is Cobyric acid synthase (494 aa).

The GATase cobBQ-type domain occupies Lys-254 to Ala-453. Cys-338 serves as the catalytic Nucleophile. His-445 is a catalytic residue.

This sequence belongs to the CobB/CobQ family. CobQ subfamily.

It participates in cofactor biosynthesis; adenosylcobalamin biosynthesis. Its function is as follows. Catalyzes amidations at positions B, D, E, and G on adenosylcobyrinic A,C-diamide. NH(2) groups are provided by glutamine, and one molecule of ATP is hydrogenolyzed for each amidation. The protein is Cobyric acid synthase of Albidiferax ferrireducens (strain ATCC BAA-621 / DSM 15236 / T118) (Rhodoferax ferrireducens).